The chain runs to 132 residues: Regulator of ribonuclease activity B (132 aa).

The protein belongs to the RraB family. Interacts with the C-terminal region of Rne.

The protein localises to the cytoplasm. In terms of biological role, globally modulates RNA abundance by binding to RNase E (Rne) and regulating its endonucleolytic activity. Can modulate Rne action in a substrate-dependent manner by altering the composition of the degradosome. The chain is Regulator of ribonuclease activity B from Alteromonas mediterranea (strain DSM 17117 / CIP 110805 / LMG 28347 / Deep ecotype).